The following is a 347-amino-acid chain: NADH-ubiquinone oxidoreductase chain 2 (347 aa).

11 consecutive transmembrane segments (helical) span residues 1–21 (MNPL…LITA), 25–45 (HWFL…PVLT), 55–75 (AAIK…MAIL), 96–116 (LMIL…FWVP), 123–143 (TLTS…SIMY), 145–165 (IFPV…IMVG), 178–198 (ILAY…PYNP), 199–219 (NITI…FLAL), 237–257 (LTWL…LPPL), 274–294 (GTLI…YFYM), and 324–344 (LLLP…PLTF).

Belongs to the complex I subunit 2 family. In terms of assembly, core subunit of respiratory chain NADH dehydrogenase (Complex I) which is composed of 45 different subunits. Interacts with TMEM242.

Its subcellular location is the mitochondrion inner membrane. The enzyme catalyses a ubiquinone + NADH + 5 H(+)(in) = a ubiquinol + NAD(+) + 4 H(+)(out). Its function is as follows. Core subunit of the mitochondrial membrane respiratory chain NADH dehydrogenase (Complex I) which catalyzes electron transfer from NADH through the respiratory chain, using ubiquinone as an electron acceptor. Essential for the catalytic activity and assembly of complex I. The chain is NADH-ubiquinone oxidoreductase chain 2 from Symphalangus syndactylus (Siamang).